Reading from the N-terminus, the 363-residue chain is Small ribosomal subunit biogenesis GTPase RsgA (363 aa).

Residues 112 to 268 (HQQVIAANID…LIDTPGMREL (157 aa)) form the CP-type G domain. Residues 157–160 (TKAD) and 210–218 (GSSGAGKST) contribute to the GTP site. Zn(2+) is bound by residues Cys291, Cys296, His298, and Cys304. A disordered region spans residues 340–363 (RVAQNNRGKGSGKRPASIDRPGRR).

Belongs to the TRAFAC class YlqF/YawG GTPase family. RsgA subfamily. Monomer. Associates with 30S ribosomal subunit, binds 16S rRNA. It depends on Zn(2+) as a cofactor.

The protein localises to the cytoplasm. In terms of biological role, one of several proteins that assist in the late maturation steps of the functional core of the 30S ribosomal subunit. Helps release RbfA from mature subunits. May play a role in the assembly of ribosomal proteins into the subunit. Circularly permuted GTPase that catalyzes slow GTP hydrolysis, GTPase activity is stimulated by the 30S ribosomal subunit. This chain is Small ribosomal subunit biogenesis GTPase RsgA, found in Xanthomonas oryzae pv. oryzae (strain PXO99A).